A 320-amino-acid polypeptide reads, in one-letter code: Prophage side tail fiber protein homolog StfQ (320 aa).

Disordered stretches follow at residues 147-213 (SGRA…HKSS) and 241-270 (TTSG…TAAS). Polar residues-rich tracts occupy residues 172–206 (DLGT…NSAG) and 241–258 (TTSG…SSDG). Residues 261-270 (THSLSGTAAS) are compositionally biased toward low complexity.

Belongs to the tail fiber family.

The polypeptide is Prophage side tail fiber protein homolog StfQ (stfQ) (Escherichia coli (strain K12)).